A 406-amino-acid chain; its full sequence is Tryptophan synthase beta chain (406 aa).

At K99 the chain carries N6-(pyridoxal phosphate)lysine.

The protein belongs to the TrpB family. As to quaternary structure, tetramer of two alpha and two beta chains. Pyridoxal 5'-phosphate serves as cofactor.

It carries out the reaction (1S,2R)-1-C-(indol-3-yl)glycerol 3-phosphate + L-serine = D-glyceraldehyde 3-phosphate + L-tryptophan + H2O. It functions in the pathway amino-acid biosynthesis; L-tryptophan biosynthesis; L-tryptophan from chorismate: step 5/5. Functionally, the beta subunit is responsible for the synthesis of L-tryptophan from indole and L-serine. The protein is Tryptophan synthase beta chain of Phenylobacterium zucineum (strain HLK1).